We begin with the raw amino-acid sequence, 187 residues long: Transmembrane protein 272 (187 aa).

4 helical membrane passes run Cys-21–Met-41, Leu-52–Leu-72, Ile-107–Phe-127, and Leu-149–Leu-169.

The protein resides in the membrane. The chain is Transmembrane protein 272 from Homo sapiens (Human).